We begin with the raw amino-acid sequence, 190 residues long: Vexin (190 aa).

The interval 88 to 156 (AEKKASRFSR…DEATLPLTAH (69 aa)) is disordered. Residues 117 to 133 (TDKQNAPTVPASPSSYE) are compositionally biased toward polar residues. The span at 136–149 (GCREQRPENPKDEA) shows a compositional bias: basic and acidic residues.

This sequence belongs to the vexin family. As to expression, expressed in differentiating progenitors in the developing central nervous system (CNS).

Its subcellular location is the cell membrane. The protein resides in the nucleus. Required for neurogenesis in the neural plate and retina. Cooperates with cell cycle inhibitor cdknx/p27(xic1) to enhance neurogenesis and increase the levels of the neuronal determination factor neurog2/X-ngngr-1. This Xenopus laevis (African clawed frog) protein is Vexin.